A 413-amino-acid chain; its full sequence is uncharacterized protein (413 aa).

An N-acetyltransferase domain is found at 3–155 (MEPRVLRREE…SRVRLSVPAG (153 aa)). Acetyl-CoA-binding positions include 86 to 88 (VSV), 94 to 99 (RRGVLT), and 122 to 123 (SE). The active-site Proton donor is the tyrosine 127. Phenylalanine 413 serves as the catalytic Proton acceptor; via carboxylate.

Belongs to the acetyltransferase Eis family. Homohexamer; trimer of dimers.

This is an uncharacterized protein from Streptomyces coelicolor (strain ATCC BAA-471 / A3(2) / M145).